Here is a 365-residue protein sequence, read N- to C-terminus: tRNA 2-selenouridine synthase (365 aa).

The Rhodanese domain occupies 16 to 138 (FLLKTPLIDL…LRRYLINVID (123 aa)). The active-site S-selanylcysteine intermediate is the cysteine 98.

It belongs to the SelU family. In terms of assembly, monomer.

It catalyses the reaction 5-methylaminomethyl-2-thiouridine(34) in tRNA + selenophosphate + (2E)-geranyl diphosphate + H2O + H(+) = 5-methylaminomethyl-2-selenouridine(34) in tRNA + (2E)-thiogeraniol + phosphate + diphosphate. The catalysed reaction is 5-methylaminomethyl-2-thiouridine(34) in tRNA + (2E)-geranyl diphosphate = 5-methylaminomethyl-S-(2E)-geranyl-thiouridine(34) in tRNA + diphosphate. The enzyme catalyses 5-methylaminomethyl-S-(2E)-geranyl-thiouridine(34) in tRNA + selenophosphate + H(+) = 5-methylaminomethyl-2-(Se-phospho)selenouridine(34) in tRNA + (2E)-thiogeraniol. It carries out the reaction 5-methylaminomethyl-2-(Se-phospho)selenouridine(34) in tRNA + H2O = 5-methylaminomethyl-2-selenouridine(34) in tRNA + phosphate. Its function is as follows. Involved in the post-transcriptional modification of the uridine at the wobble position (U34) of tRNA(Lys), tRNA(Glu) and tRNA(Gln). Catalyzes the conversion of 2-thiouridine (S2U-RNA) to 2-selenouridine (Se2U-RNA). Acts in a two-step process involving geranylation of 2-thiouridine (S2U) to S-geranyl-2-thiouridine (geS2U) and subsequent selenation of the latter derivative to 2-selenouridine (Se2U) in the tRNA chain. This chain is tRNA 2-selenouridine synthase, found in Psychromonas ingrahamii (strain DSM 17664 / CCUG 51855 / 37).